We begin with the raw amino-acid sequence, 297 residues long: MLNGIVVVNKPRGVTSSDCVYKLRKILQIRKIGHAGTLDPEVNGVLPIAIGQATKLIELMHEKPKSYIGSGMFGKATDSYDLDGTTTAEEKIVTPFTSDEIISGMKKLTGKIDQVPPIYSAVRVNGKRLYEYARENIPVERPKRKVNIYSYELTQDPEYDPLEKTESFNFAIRCSKGTYVRSLVNDLGEELGVPAVMTSLTRTSSSGFDLSQAVDLETIEKEIDYPEKWLQPIDSFFVDLPQLQISPDQFKRVSNGASIKLNTTYAKVALVYNGHIKAIYQRQGKIYRPEMMLLKNE.

Residue Asp-39 is the Nucleophile of the active site.

The protein belongs to the pseudouridine synthase TruB family. Type 1 subfamily.

The enzyme catalyses uridine(55) in tRNA = pseudouridine(55) in tRNA. In terms of biological role, responsible for synthesis of pseudouridine from uracil-55 in the psi GC loop of transfer RNAs. The sequence is that of tRNA pseudouridine synthase B from Lactobacillus johnsonii (strain CNCM I-12250 / La1 / NCC 533).